A 155-amino-acid polypeptide reads, in one-letter code: Transcriptional repressor NrdR (155 aa).

Residues 3–34 fold into a zinc finger; that stretch reads CPFCGHSNTQVLDTRMSEDGDAVRRRRRCEAC. The ATP-cone domain occupies 49-139; sequence PAIVKKNGSR…VYRSFEDVSE (91 aa).

It belongs to the NrdR family. Requires Zn(2+) as cofactor.

Its function is as follows. Negatively regulates transcription of bacterial ribonucleotide reductase nrd genes and operons by binding to NrdR-boxes. This is Transcriptional repressor NrdR from Cupriavidus necator (strain ATCC 17699 / DSM 428 / KCTC 22496 / NCIMB 10442 / H16 / Stanier 337) (Ralstonia eutropha).